The chain runs to 472 residues: 2-oxoisovalerate dehydrogenase subunit alpha 2, mitochondrial (472 aa).

185–187 (QYR) serves as a coordination point for thiamine diphosphate. The K(+) site is built by serine 234, threonine 239, and glutamine 240.

It belongs to the BCKDHA family. In terms of assembly, heterotetramer of alpha and beta chains. The cofactor is thiamine diphosphate.

The protein resides in the mitochondrion matrix. The catalysed reaction is N(6)-[(R)-lipoyl]-L-lysyl-[protein] + 3-methyl-2-oxobutanoate + H(+) = N(6)-[(R)-S(8)-2-methylpropanoyldihydrolipoyl]-L-lysyl-[protein] + CO2. Functionally, the branched-chain alpha-keto dehydrogenase complex catalyzes the overall conversion of alpha-keto acids to acyl-CoA and CO(2). It contains multiple copies of three enzymatic components: branched-chain alpha-keto acid decarboxylase (E1), lipoamide acyltransferase (E2) and lipoamide dehydrogenase (E3). The sequence is that of 2-oxoisovalerate dehydrogenase subunit alpha 2, mitochondrial from Arabidopsis thaliana (Mouse-ear cress).